A 142-amino-acid polypeptide reads, in one-letter code: ER-derived vesicles protein ERV15 (142 aa).

Residues 1-7 (MSGTGLS) lie on the Cytoplasmic side of the membrane. Residues 8–28 (LFVTGLILNCLNSICQIYFTI) form a helical membrane-spanning segment. Residues 29–55 (LYGDLEADYINSIELCKRVNRLSVPEA) lie on the Extracellular side of the membrane. The chain crosses the membrane as a helical span at residues 56 to 76 (ILQAFISALFLFNGYWFVFLL). Residues 77–114 (NVPVLAYNASKVYKKTHLLDATDIFRKLGRCKIECFLK) are Cytoplasmic-facing. Residues 115-135 (LGFYLLIFFFYFYRMVTALLE) traverse the membrane as a helical segment. Residues 136–142 (NDANLIS) are Extracellular-facing.

The protein belongs to the cornichon family.

The protein resides in the membrane. This Saccharomyces cerevisiae (strain ATCC 204508 / S288c) (Baker's yeast) protein is ER-derived vesicles protein ERV15 (ERV15).